Consider the following 180-residue polypeptide: Prothoracicotropic hormone (180 aa).

An N-terminal signal peptide occupies residues 1-15 (MKLLILCVMVHGLLA). Positions 16–64 (EGPGQVLWKEQVVAPEFLLDDREDIASNRNAFFYEDKRSFRPEGLGEQV) are excised as a propeptide. Cystine bridges form between cysteine 88–cysteine 123 and cysteine 111–cysteine 175.

As to quaternary structure, homodimer; disulfide-linked.

The protein resides in the secreted. In terms of biological role, PTTH is a brain secretory polypeptide of insects which stimulates the prothoracic glands to produce and release ecdysone, the steroid essential to insect development. The chain is Prothoracicotropic hormone from Camponotus floridanus (Florida carpenter ant).